A 93-amino-acid polypeptide reads, in one-letter code: Putative ribosomal protein eL43-like (93 aa).

Residues 40 to 61 (CSFCGKTKMKRRAVKIRHCNSC) form a C4-type zinc finger.

It belongs to the eukaryotic ribosomal protein eL43 family.

The sequence is that of Putative ribosomal protein eL43-like (RPL37AP8) from Homo sapiens (Human).